Reading from the N-terminus, the 520-residue chain is UDP-N-acetylmuramoyl-L-alanyl-D-glutamate--2,6-diaminopimelate ligase (520 aa).

L48 lines the UDP-N-acetyl-alpha-D-muramoyl-L-alanyl-D-glutamate pocket. 134 to 140 (GTSGKTT) contacts ATP. UDP-N-acetyl-alpha-D-muramoyl-L-alanyl-D-glutamate-binding positions include 176–177 (TT), S203, and R211. K243 bears the N6-carboxylysine mark. Meso-2,6-diaminopimelate-binding positions include R405, 429–432 (DNPR), G483, and E487. The Meso-diaminopimelate recognition motif signature appears at 429-432 (DNPR).

It belongs to the MurCDEF family. MurE subfamily. It depends on Mg(2+) as a cofactor. Carboxylation is probably crucial for Mg(2+) binding and, consequently, for the gamma-phosphate positioning of ATP.

The protein localises to the cytoplasm. The enzyme catalyses UDP-N-acetyl-alpha-D-muramoyl-L-alanyl-D-glutamate + meso-2,6-diaminopimelate + ATP = UDP-N-acetyl-alpha-D-muramoyl-L-alanyl-gamma-D-glutamyl-meso-2,6-diaminopimelate + ADP + phosphate + H(+). The protein operates within cell wall biogenesis; peptidoglycan biosynthesis. Catalyzes the addition of meso-diaminopimelic acid to the nucleotide precursor UDP-N-acetylmuramoyl-L-alanyl-D-glutamate (UMAG) in the biosynthesis of bacterial cell-wall peptidoglycan. The sequence is that of UDP-N-acetylmuramoyl-L-alanyl-D-glutamate--2,6-diaminopimelate ligase from Mycolicibacterium paratuberculosis (strain ATCC BAA-968 / K-10) (Mycobacterium paratuberculosis).